Consider the following 230-residue polypeptide: Ribonuclease 3 (230 aa).

The RNase III domain occupies 8–135 (IVELKEKLGI…LIGAVYLQTN (128 aa)). Glu-48 contributes to the Mg(2+) binding site. Asp-52 is an active-site residue. Mg(2+) is bound by residues Asp-121 and Glu-124. The active site involves Glu-124. Positions 161–230 (DYKTMIQELV…AHFAFQKLSK (70 aa)) constitute a DRBM domain.

The protein belongs to the ribonuclease III family. Homodimer. It depends on Mg(2+) as a cofactor.

It localises to the cytoplasm. The catalysed reaction is Endonucleolytic cleavage to 5'-phosphomonoester.. Digests double-stranded RNA. Involved in the processing of primary rRNA transcript to yield the immediate precursors to the large and small rRNAs (23S and 16S). Processes some mRNAs, and tRNAs when they are encoded in the rRNA operon. Processes pre-crRNA and tracrRNA of type II CRISPR loci if present in the organism. The chain is Ribonuclease 3 from Natranaerobius thermophilus (strain ATCC BAA-1301 / DSM 18059 / JW/NM-WN-LF).